A 59-amino-acid polypeptide reads, in one-letter code: Large ribosomal subunit protein bL32B (59 aa).

It belongs to the bacterial ribosomal protein bL32 family.

This is Large ribosomal subunit protein bL32B (rpmF2) from Enterococcus faecalis (strain ATCC 700802 / V583).